We begin with the raw amino-acid sequence, 948 residues long: Bifunctional glutamine synthetase adenylyltransferase/adenylyl-removing enzyme (948 aa).

The tract at residues M1–P445 is adenylyl removase. The tract at residues E451–F948 is adenylyl transferase.

Belongs to the GlnE family. Mg(2+) is required as a cofactor.

The catalysed reaction is [glutamine synthetase]-O(4)-(5'-adenylyl)-L-tyrosine + phosphate = [glutamine synthetase]-L-tyrosine + ADP. It carries out the reaction [glutamine synthetase]-L-tyrosine + ATP = [glutamine synthetase]-O(4)-(5'-adenylyl)-L-tyrosine + diphosphate. Its function is as follows. Involved in the regulation of glutamine synthetase GlnA, a key enzyme in the process to assimilate ammonia. When cellular nitrogen levels are high, the C-terminal adenylyl transferase (AT) inactivates GlnA by covalent transfer of an adenylyl group from ATP to specific tyrosine residue of GlnA, thus reducing its activity. Conversely, when nitrogen levels are low, the N-terminal adenylyl removase (AR) activates GlnA by removing the adenylyl group by phosphorolysis, increasing its activity. The regulatory region of GlnE binds the signal transduction protein PII (GlnB) which indicates the nitrogen status of the cell. In Methylococcus capsulatus (strain ATCC 33009 / NCIMB 11132 / Bath), this protein is Bifunctional glutamine synthetase adenylyltransferase/adenylyl-removing enzyme.